Reading from the N-terminus, the 147-residue chain is Transcriptional regulator MraZ (147 aa).

2 consecutive SpoVT-AbrB domains span residues 5-50 and 79-122; these read AVAL…PLTA and AQEE…SDAG.

The protein belongs to the MraZ family. As to quaternary structure, forms oligomers.

The protein resides in the cytoplasm. The protein localises to the nucleoid. This Azoarcus sp. (strain BH72) protein is Transcriptional regulator MraZ.